A 509-amino-acid chain; its full sequence is MRLEDLARVVDPIAVRGDLTREINGLYCDSRQVRSGGLFFALKGVASDGHDFIASARERGAVAVVLEDETRAPCGMEWIRVGDARLAMSRMAALFYGQPTDGVPVVGITGTNGKTTTTYLVEAIMSRAGIPAAVLGTISYRFGSKLVPAPHTTPESVELQATIRDLVDEGAKAVVMEVSSHALEQRRVDSCRFDVAVFTNLTRDHLDYHRDMESYFGSKARLFTELVAPDGVKPRRAAAINRDDSYGARLVETAVAPVISYGLAADAAVRAENVVFSVDGIAGTLVTPFGTAPFHSHLLGRFNLYNILAAVAAGVGLGLSLDVILGGIEGDVRVPGRLERVHNERGVTVLVDYAHTGDALENVLKTVSELATGRIITVFGCGGDRDRGKRPVMAEISGRYSHLTIVTSDNPRTEEPAAIIKEVLTGIIPMGLREYDARELNRGFVEKGFTSLVSRHDAIRLAATVAVAGDIVLLAGKGHEDYQIIGTEKFHFDDREEAIAAFRSSDSGE.

Ser30 contributes to the UDP-N-acetyl-alpha-D-muramoyl-L-alanyl-D-glutamate binding site. ATP is bound at residue 110–116 (GTNGKTT). Residues 152–153 (TT), Ser179, Gln185, and Arg187 each bind UDP-N-acetyl-alpha-D-muramoyl-L-alanyl-D-glutamate. An N6-carboxylysine modification is found at Lys219. Residues Arg385, 409 to 412 (DNPR), Gly476, and Glu480 each bind meso-2,6-diaminopimelate. A Meso-diaminopimelate recognition motif motif is present at residues 409 to 412 (DNPR).

Belongs to the MurCDEF family. MurE subfamily. Mg(2+) is required as a cofactor. Carboxylation is probably crucial for Mg(2+) binding and, consequently, for the gamma-phosphate positioning of ATP.

It is found in the cytoplasm. It catalyses the reaction UDP-N-acetyl-alpha-D-muramoyl-L-alanyl-D-glutamate + meso-2,6-diaminopimelate + ATP = UDP-N-acetyl-alpha-D-muramoyl-L-alanyl-gamma-D-glutamyl-meso-2,6-diaminopimelate + ADP + phosphate + H(+). It participates in cell wall biogenesis; peptidoglycan biosynthesis. In terms of biological role, catalyzes the addition of meso-diaminopimelic acid to the nucleotide precursor UDP-N-acetylmuramoyl-L-alanyl-D-glutamate (UMAG) in the biosynthesis of bacterial cell-wall peptidoglycan. This chain is UDP-N-acetylmuramoyl-L-alanyl-D-glutamate--2,6-diaminopimelate ligase, found in Geobacter sulfurreducens (strain ATCC 51573 / DSM 12127 / PCA).